A 443-amino-acid polypeptide reads, in one-letter code: Tryptophan synthase beta chain 2, chloroplastic (443 aa).

The tract at residues 1–32 (PGPPPPAPEGRRRRGRGRNAAGQAVAAEASPA) is disordered. The N-terminal 45 residues, 1–45 (PGPPPPAPEGRRRRGRGRNAAGQAVAAEASPAAVEMGNGAAAPGL), are a transit peptide targeting the chloroplast. Residues 18–32 (RNAAGQAVAAEASPA) show a composition bias toward low complexity. Residue K138 is modified to N6-(pyridoxal phosphate)lysine.

It belongs to the TrpB family. Tetramer of two alpha and two beta chains. Pyridoxal 5'-phosphate serves as cofactor.

It is found in the plastid. The protein localises to the chloroplast. It catalyses the reaction (1S,2R)-1-C-(indol-3-yl)glycerol 3-phosphate + L-serine = D-glyceraldehyde 3-phosphate + L-tryptophan + H2O. It participates in amino-acid biosynthesis; L-tryptophan biosynthesis; L-tryptophan from chorismate: step 5/5. The beta subunit is responsible for the synthesis of L-tryptophan from indole and L-serine. In Zea mays (Maize), this protein is Tryptophan synthase beta chain 2, chloroplastic (TSB2).